A 465-amino-acid chain; its full sequence is Methionine aminopeptidase 2-2 (465 aa).

The span at 1-11 shows a compositional bias: basic residues; that stretch reads MGSKTPHNHRR. The tract at residues 1 to 89 is disordered; it reads MGSKTPHNHR…KKKKNTKELE (89 aa). Positions 43–54 are enriched in acidic residues; sequence GESEGGEDEDDD. Residues 73–84 show a composition bias toward basic residues; sequence RNKRKKKKKKKN. Residue H217 coordinates substrate. Residues D238, D249, and H318 each contribute to the a divalent metal cation site. H326 provides a ligand contact to substrate. 2 residues coordinate a divalent metal cation: E351 and E446.

This sequence belongs to the peptidase M24A family. Methionine aminopeptidase eukaryotic type 2 subfamily. Co(2+) is required as a cofactor. It depends on Zn(2+) as a cofactor. Mn(2+) serves as cofactor. The cofactor is Fe(2+).

The protein localises to the cytoplasm. The enzyme catalyses Release of N-terminal amino acids, preferentially methionine, from peptides and arylamides.. Functionally, cotranslationally removes the N-terminal methionine from nascent proteins. The N-terminal methionine is often cleaved when the second residue in the primary sequence is small and uncharged (Met-Ala-, Cys, Gly, Pro, Ser, Thr, or Val). This Ajellomyces capsulatus (strain G186AR / H82 / ATCC MYA-2454 / RMSCC 2432) (Darling's disease fungus) protein is Methionine aminopeptidase 2-2.